The following is a 358-amino-acid chain: Aminomethyltransferase (358 aa).

The protein belongs to the GcvT family. In terms of assembly, the glycine cleavage system is composed of four proteins: P, T, L and H.

The enzyme catalyses N(6)-[(R)-S(8)-aminomethyldihydrolipoyl]-L-lysyl-[protein] + (6S)-5,6,7,8-tetrahydrofolate = N(6)-[(R)-dihydrolipoyl]-L-lysyl-[protein] + (6R)-5,10-methylene-5,6,7,8-tetrahydrofolate + NH4(+). The glycine cleavage system catalyzes the degradation of glycine. This is Aminomethyltransferase from Francisella tularensis subsp. tularensis (strain WY96-3418).